Here is a 46-residue protein sequence, read N- to C-terminus: Phospholipase A2 superbin c (46 aa).

Residues Y28, G30, and G32 each coordinate Ca(2+). An intrachain disulfide couples C29 to C45.

Ca(2+) serves as cofactor. As to expression, expressed by the venom gland.

The protein localises to the secreted. The catalysed reaction is a 1,2-diacyl-sn-glycero-3-phosphocholine + H2O = a 1-acyl-sn-glycero-3-phosphocholine + a fatty acid + H(+). Snake venom phospholipase A2 (PLA2) that inhibits collagen-induced platelet aggregation. In terms of inhibition of platelet aggregation, superbin c is more potent as superbin d. PLA2 catalyzes the calcium-dependent hydrolysis of the 2-acyl groups in 3-sn-phosphoglycerides. The protein is Phospholipase A2 superbin c of Austrelaps superbus (Lowland copperhead snake).